A 433-amino-acid chain; its full sequence is 5-methylthioadenosine/S-adenosylhomocysteine deaminase (433 aa).

Zn(2+)-binding residues include His-62 and His-64. Residues Glu-91, Arg-143, and His-183 each coordinate substrate. His-210 contributes to the Zn(2+) binding site. Residues Glu-213 and Asp-298 each contribute to the substrate site. Position 298 (Asp-298) interacts with Zn(2+).

It belongs to the metallo-dependent hydrolases superfamily. MTA/SAH deaminase family. Zn(2+) serves as cofactor.

The catalysed reaction is S-adenosyl-L-homocysteine + H2O + H(+) = S-inosyl-L-homocysteine + NH4(+). The enzyme catalyses S-methyl-5'-thioadenosine + H2O + H(+) = S-methyl-5'-thioinosine + NH4(+). Functionally, catalyzes the deamination of 5-methylthioadenosine and S-adenosyl-L-homocysteine into 5-methylthioinosine and S-inosyl-L-homocysteine, respectively. Is also able to deaminate adenosine. The sequence is that of 5-methylthioadenosine/S-adenosylhomocysteine deaminase from Caldanaerobacter subterraneus subsp. tengcongensis (strain DSM 15242 / JCM 11007 / NBRC 100824 / MB4) (Thermoanaerobacter tengcongensis).